Reading from the N-terminus, the 328-residue chain is D-cysteine desulfhydrase (328 aa).

At Lys-51 the chain carries N6-(pyridoxal phosphate)lysine.

The protein belongs to the ACC deaminase/D-cysteine desulfhydrase family. As to quaternary structure, homodimer. Requires pyridoxal 5'-phosphate as cofactor.

It carries out the reaction D-cysteine + H2O = hydrogen sulfide + pyruvate + NH4(+) + H(+). Catalyzes the alpha,beta-elimination reaction of D-cysteine and of several D-cysteine derivatives. It could be a defense mechanism against D-cysteine. In Escherichia coli (strain UTI89 / UPEC), this protein is D-cysteine desulfhydrase.